The primary structure comprises 78 residues: uncharacterized protein (78 aa).

The N-terminal stretch at 1–22 (MFKKSVLFATLLSGVMAFSTNA) is a signal peptide.

The protein belongs to the BhsA/McbA family.

It localises to the periplasm. Functionally, probably involved in reactive chlorine species (RCS) stress resistance. This is an uncharacterized protein from Escherichia coli (strain K12).